A 535-amino-acid polypeptide reads, in one-letter code: Xylan 1,3-beta-xylosidase (535 aa).

The active-site Proton acceptor is the D16. E189 acts as the Proton donor in catalysis.

The protein belongs to the glycosyl hydrolase 43 family.

It catalyses the reaction Hydrolysis of successive xylose residues from the non-reducing termini of (1-&gt;3)-beta-D-xylans.. Its activity is regulated as follows. Inhibited by Ag(+), Cu(2+), Hg(2+), Mn(2+), Pb(2+), Zn(2+) and p-chloromercuric benzoic acid. Beta-1,3-xylosidase that hydrolyzes beta-1,3-xylooligosaccharides to D-xylose. This chain is Xylan 1,3-beta-xylosidase (xloA), found in Vibrio sp.